The sequence spans 340 residues: Tetraacyldisaccharide 4'-kinase (340 aa).

ATP is bound at residue Ser47–Thr54.

The protein belongs to the LpxK family.

The catalysed reaction is a lipid A disaccharide + ATP = a lipid IVA + ADP + H(+). It participates in glycolipid biosynthesis; lipid IV(A) biosynthesis; lipid IV(A) from (3R)-3-hydroxytetradecanoyl-[acyl-carrier-protein] and UDP-N-acetyl-alpha-D-glucosamine: step 6/6. Functionally, transfers the gamma-phosphate of ATP to the 4'-position of a tetraacyldisaccharide 1-phosphate intermediate (termed DS-1-P) to form tetraacyldisaccharide 1,4'-bis-phosphate (lipid IVA). This chain is Tetraacyldisaccharide 4'-kinase, found in Flavobacterium johnsoniae (strain ATCC 17061 / DSM 2064 / JCM 8514 / BCRC 14874 / CCUG 350202 / NBRC 14942 / NCIMB 11054 / UW101) (Cytophaga johnsonae).